Consider the following 159-residue polypeptide: Phosphopantetheine adenylyltransferase (159 aa).

Position 9 (threonine 9) interacts with substrate. ATP is bound by residues 9–10 (TF) and histidine 17. Substrate is bound by residues lysine 41, leucine 73, and arginine 87. ATP contacts are provided by residues 88–90 (GLR), glutamate 98, and 123–129 (YSFISST).

Belongs to the bacterial CoaD family. Homohexamer. It depends on Mg(2+) as a cofactor.

The protein resides in the cytoplasm. The enzyme catalyses (R)-4'-phosphopantetheine + ATP + H(+) = 3'-dephospho-CoA + diphosphate. The protein operates within cofactor biosynthesis; coenzyme A biosynthesis; CoA from (R)-pantothenate: step 4/5. Reversibly transfers an adenylyl group from ATP to 4'-phosphopantetheine, yielding dephospho-CoA (dPCoA) and pyrophosphate. The polypeptide is Phosphopantetheine adenylyltransferase (Pseudomonas syringae pv. syringae (strain B728a)).